A 134-amino-acid chain; its full sequence is Larval cuticle protein A3A (134 aa).

Repeat 1 spans residues 23–26; that stretch reads AAPV. Residues 38–80 form a disordered region; the sequence is DPHPQYSYGYDIQDGLTGDSKNQQETRDGDVVQGSYSLVDPDG. One can recognise a Chitin-binding type R&amp;R domain in the interval 40–106; sequence HPQYSYGYDI…AVVHREPLVA (67 aa). Residues 111 to 114 form repeat 2; it reads AAPA.

In terms of biological role, component of the cuticle of the larva of Tenebrio molitor. The chain is Larval cuticle protein A3A from Tenebrio molitor (Yellow mealworm beetle).